Consider the following 149-residue polypeptide: Putative pre-16S rRNA nuclease (149 aa).

It belongs to the YqgF nuclease family.

It is found in the cytoplasm. Functionally, could be a nuclease involved in processing of the 5'-end of pre-16S rRNA. The chain is Putative pre-16S rRNA nuclease from Pseudoalteromonas translucida (strain TAC 125).